A 119-amino-acid chain; its full sequence is Large ribosomal subunit protein uL18 (119 aa).

The protein belongs to the universal ribosomal protein uL18 family. In terms of assembly, part of the 50S ribosomal subunit; part of the 5S rRNA/L5/L18/L25 subcomplex. Contacts the 5S and 23S rRNAs.

This is one of the proteins that bind and probably mediate the attachment of the 5S RNA into the large ribosomal subunit, where it forms part of the central protuberance. This chain is Large ribosomal subunit protein uL18, found in Ruegeria pomeroyi (strain ATCC 700808 / DSM 15171 / DSS-3) (Silicibacter pomeroyi).